Here is a 111-residue protein sequence, read N- to C-terminus: Nucleoid-associated protein Ppha_1174 (111 aa).

It belongs to the YbaB/EbfC family. As to quaternary structure, homodimer.

It is found in the cytoplasm. The protein resides in the nucleoid. Functionally, binds to DNA and alters its conformation. May be involved in regulation of gene expression, nucleoid organization and DNA protection. The polypeptide is Nucleoid-associated protein Ppha_1174 (Pelodictyon phaeoclathratiforme (strain DSM 5477 / BU-1)).